We begin with the raw amino-acid sequence, 262 residues long: MRIALGIEYDGRAFAGWQSQPHGNTVQDRLNRALGQIAGNRDVVTHAAGRTDAGVHAAMQVVHFDTDASRPLNAWVRGVNALLPPEVAVVWAREVGDDFHARFSAFSRSYSYFLLTHPVRSCLLAGKVGWYHQALDVAAMREAAAGLLGRHDFSSFRASECQAKSPVKDLQRLDIIEADGLLRFDLHADAFLHHMVRNIVGALLYVGKGALSPADMQSLLAARDRTSAPPTFMPDGLYLTGVGYPDEFSLPSRCEAARLRLR.

Residue Asp52 is the Nucleophile of the active site. Residue Tyr110 coordinates substrate.

Belongs to the tRNA pseudouridine synthase TruA family. In terms of assembly, homodimer.

The enzyme catalyses uridine(38/39/40) in tRNA = pseudouridine(38/39/40) in tRNA. Formation of pseudouridine at positions 38, 39 and 40 in the anticodon stem and loop of transfer RNAs. In Chromobacterium violaceum (strain ATCC 12472 / DSM 30191 / JCM 1249 / CCUG 213 / NBRC 12614 / NCIMB 9131 / NCTC 9757 / MK), this protein is tRNA pseudouridine synthase A.